A 116-amino-acid chain; its full sequence is Endoribonuclease toxin ChpB (116 aa).

This sequence belongs to the PemK/MazF family. Homodimer, interacts with ChpS, which inhibits the endoribonuclease activity.

With respect to regulation, stimulated in vitro in a concentration-dependent fashion by extracellular death factor (EDF, a quorum sensing pentapeptide sequence NNWNN, probably produced from the zwf gene product glucose-6-phosphate 1-dehydrogenase), which is able to overcome inhibition by cognate antitoxin ChpS. Toxic component of a type II toxin-antitoxin (TA) system. ChpB is a sequence-specific mRNA and (weak) tmRNA endoribonuclease that inhibits protein synthesis and induces bacterial stasis. Cleavage is independent of the ribosome. Cleavage occurs at ACY sequences where Y is not C. The endoribonuclease activity is not as strong as that of MazF. The endoribonuclease activity (a toxin) is inhibited by its labile cognate antitoxin ChpS. Toxicity results when the levels of ChpS decrease in the cell, leading to mRNA degradation. Both ChpS and ChpB probably bind to the promoter region of the chpS-chpB operon to autoregulate their synthesis. The sequence is that of Endoribonuclease toxin ChpB (chpB) from Escherichia coli (strain K12).